Reading from the N-terminus, the 82-residue chain is Small ribosomal subunit protein bS16 (82 aa).

Belongs to the bacterial ribosomal protein bS16 family.

In Dehalococcoides mccartyi (strain ATCC BAA-2100 / JCM 16839 / KCTC 5957 / BAV1), this protein is Small ribosomal subunit protein bS16.